A 255-amino-acid polypeptide reads, in one-letter code: Probable ubiquitin carboxyl-terminal hydrolase (255 aa).

Residues 13 to 237 (NWIPLEANPE…IRFNLMGLVK (225 aa)) form the UCH catalytic domain. An interaction with ubiquitin region spans residues 16-21 (PLEANP). Residue Cys103 is the Nucleophile of the active site. His177 serves as the catalytic Proton donor. An interaction with ubiquitin region spans residues 227 to 232 (EIRFNL). The tract at residues 235–255 (LVKKPNEESEEEEEKEKEETK) is disordered. Over residues 242 to 255 (ESEEEEEKEKEETK) the composition is skewed to acidic residues.

It belongs to the peptidase C12 family.

It localises to the cytoplasm. It carries out the reaction Thiol-dependent hydrolysis of ester, thioester, amide, peptide and isopeptide bonds formed by the C-terminal Gly of ubiquitin (a 76-residue protein attached to proteins as an intracellular targeting signal).. In terms of biological role, ubiquitin-protein hydrolase is involved both in the processing of ubiquitin precursors and of ubiquitinated proteins. This enzyme is a thiol protease that recognizes and hydrolyzes a peptide bond at the C-terminal glycine of either ubiquitin or nedd8. The sequence is that of Probable ubiquitin carboxyl-terminal hydrolase (uch1) from Dictyostelium discoideum (Social amoeba).